We begin with the raw amino-acid sequence, 51 residues long: Large ribosomal subunit protein eL39 (51 aa).

Residues 1–15 (MAAKKSFKIKQKLAK) show a composition bias toward basic residues. The tract at residues 1-21 (MAAKKSFKIKQKLAKAKNQNR) is disordered.

Belongs to the eukaryotic ribosomal protein eL39 family. Interacts with YIH1.

The polypeptide is Large ribosomal subunit protein eL39 (RPL39) (Eremothecium gossypii (strain ATCC 10895 / CBS 109.51 / FGSC 9923 / NRRL Y-1056) (Yeast)).